Here is a 394-residue protein sequence, read N- to C-terminus: Fructose-bisphosphate aldolase, chloroplastic (394 aa).

A chloroplast-targeting transit peptide spans 1–46 (MASASLLKTSPVLDNPEFLKGQTLRIPSVAGVRFTPSGSSSLTVRA). Substrate contacts are provided by Arg-93 and Lys-183. Glu-223 acts as the Proton acceptor in catalysis. Lys-265 serves as the catalytic Schiff-base intermediate with dihydroxyacetone-P.

Belongs to the class I fructose-bisphosphate aldolase family.

It localises to the plastid. The protein resides in the chloroplast. The enzyme catalyses beta-D-fructose 1,6-bisphosphate = D-glyceraldehyde 3-phosphate + dihydroxyacetone phosphate. The protein operates within carbohydrate degradation; glycolysis; D-glyceraldehyde 3-phosphate and glycerone phosphate from D-glucose: step 4/4. The protein is Fructose-bisphosphate aldolase, chloroplastic of Spinacia oleracea (Spinach).